The chain runs to 366 residues: Lysophosphatidic acid receptor 1-A (366 aa).

The Extracellular portion of the chain corresponds to 1-52 (MASLSEFVSEPISMMSQTSAASESQCYYNETIAFFYNRSGKYLATEWNAVSK). Disulfide bonds link cysteine 26-cysteine 192 and cysteine 190-cysteine 197. Residues asparagine 29 and asparagine 37 are each glycosylated (N-linked (GlcNAc...) asparagine). Position 41 (lysine 41) interacts with a 1-acyl-sn-glycero-3-phosphate. The helical transmembrane segment at 53–77 (LVMGLGITVCIFIMLANLLVMVAIY) threads the bilayer. At 78 to 85 (VNRRFHFP) the chain is on the cytoplasmic side. A helical membrane pass occupies residues 86 to 109 (IYYLMANLAAADFFAGLAYFYLMF). The Extracellular portion of the chain corresponds to 110 to 123 (NTGPNTRRLTVSTW). A helical transmembrane segment spans residues 124 to 146 (LLRQGLIDTSLTASVANLLAIAI). Residue 126 to 131 (RQGLID) coordinates a 1-acyl-sn-glycero-3-phosphate. Topologically, residues 147-165 (ERHITVFRMQLHTRMSNRR) are cytoplasmic. A helical membrane pass occupies residues 166 to 186 (VVVVIVVIWTVAIVMGAIPSV). Over 187 to 206 (GWNCICDLEQCSNMAPLYSD) the chain is Extracellular. The chain crosses the membrane as a helical span at residues 207 to 227 (SYLIFWTIFNLVTFVVMVVLY). Tryptophan 212 contributes to the a 1-acyl-sn-glycero-3-phosphate binding site. The Cytoplasmic portion of the chain corresponds to 228-257 (AHIFVYVRQKTMRMSRHSSGPRRNRDTMMS). Residues 258–282 (LLKTVVIVLGAFIVCWTPGLVLLLL) traverse the membrane as a helical segment. The Extracellular portion of the chain corresponds to 283–296 (DICCPQCNILAYEK). An intrachain disulfide couples cysteine 286 to cysteine 289. The chain crosses the membrane as a helical span at residues 297–317 (FFLLLAEFNSAMNPIIYSYRD). The Cytoplasmic segment spans residues 318–366 (KEMSATFKQILCCQRTENVNGPTEGSDRSASSLNHTILAGVHSNDHSVV).

The protein belongs to the G-protein coupled receptor 1 family. As to expression, expressed at high levels in oocytes and at lower levels in brain and spinal cord. Below detection level in lung, heart, kidney, liver, muscle, stomach, and intestine.

Its subcellular location is the cell surface. The protein resides in the cell membrane. It localises to the endosome. Functionally, receptor for lysophosphatidic acid (LPA). Plays a role in the reorganization of the actin cytoskeleton, cell migration, differentiation and proliferation, and thereby contributes to the responses to tissue damage and infectious agents. Activates downstream signaling cascades via the G(i)/G(o), G(12)/G(13), and G(q) families of heteromeric G proteins. Signaling inhibits adenylyl cyclase activity and decreases cellular cAMP levels. Signaling triggers an increase of cytoplasmic Ca(2+) levels. Signaling leads to the activation of phospholipase C (PLC) and the formation of inositol 1,4,5-trisphosphate. Signaling mediates activation of down-stream MAP kinases. Contributes to the regulation of cell shape. Promotes Rho-dependent reorganization of the actin cytoskeleton in neuronal cells and neurite retraction. Promotes the activation of Rho and the formation of actin stress fibers. Promotes formation of lamellipodia at the leading edge of migrating cells via activation of Rac. Through its function as lysophosphatidic acid receptor, plays a role in chemotaxis and cell migration, including responses to injury and wounding. Promotes cell proliferation in response to lysophosphatidic acid. In Xenopus laevis (African clawed frog), this protein is Lysophosphatidic acid receptor 1-A (lpar1-a).